The following is a 171-amino-acid chain: MLGSLIVNFKLFSAGGAIMEVFSRSFKNGEEIPKVYTCDGKDISPHIGWEDVPEGTKSFVLIMDDPDAPIGTFTHWVVYDIPSQTRELLEDFPKVPEVSGIKQGINDFGRVGYGGPCPPRGHGYHRYFFKVFALSVESLGLPPGASRKDVELKMNGKILAQAHIIGLYKRD.

It belongs to the UPF0098 family.

This Aquifex aeolicus (strain VF5) protein is UPF0098 protein aq_1250.